The following is a 334-amino-acid chain: MKPKVFITREIPEVGIKMLEDEFEVEVWGDEKEIPREILLKKVKEVDALVTMLSERIDKEVFENAPKLRIVANYAVGYDNIDIEEATKRGIYVTNTPDVLTDATADLAFALLLATARHVVKGDRFVRSGEWKKRGVAWHPKWFLGYDVYGKTIGIIGLGRIGQAIAKRAKGFNMRILYYSRTRKEEVERELNAEFKPLEDLLRESDFVVLAVPLTRETYHLINEERLKLMKKTAILINIARGKVVDTNALVKALKEGWIAGAGLDVFEEEPYYNEELFKLDNVVLTPHIGSASFGAREGMAELVAKNLIAFKRGEIPPTLVNREVIKIRKPGFE.

Residues 158–161, 180–182, and 239–241 contribute to the NADP(+) site; these read LGRI, SRT, and IAR. Residues arginine 241 and glutamate 270 contribute to the active site. Histidine 288 serves as the catalytic Proton donor. 288–290 is an NADP(+) binding site; that stretch reads HIG.

It belongs to the D-isomer specific 2-hydroxyacid dehydrogenase family. GyaR subfamily. Homodimer.

Its subcellular location is the cytoplasm. It carries out the reaction glycolate + NAD(+) = glyoxylate + NADH + H(+). This chain is Glyoxylate reductase (gyaR), found in Pyrococcus horikoshii (strain ATCC 700860 / DSM 12428 / JCM 9974 / NBRC 100139 / OT-3).